Here is a 911-residue protein sequence, read N- to C-terminus: DNA mismatch repair protein MutS (911 aa).

Residues 1–10 (MDNKTDHKND) are compositionally biased toward basic and acidic residues. Residues 1–24 (MDNKTDHKNDLNSQPVPSSAPHKE) form a disordered region. 662 to 669 (GPNMGGKS) provides a ligand contact to ATP.

This sequence belongs to the DNA mismatch repair MutS family.

Functionally, this protein is involved in the repair of mismatches in DNA. It is possible that it carries out the mismatch recognition step. This protein has a weak ATPase activity. This is DNA mismatch repair protein MutS from Bartonella quintana (strain Toulouse) (Rochalimaea quintana).